The primary structure comprises 482 residues: Anthranilate synthase component 1 (482 aa).

Residues S47 and P267 to M269 each bind L-tryptophan. G302–T303 is a binding site for chorismate. E329 lines the Mg(2+) pocket. Residues Y417, R437, G451–G453, and G453 contribute to the chorismate site. A Mg(2+)-binding site is contributed by E466.

Belongs to the anthranilate synthase component I family. Heterotetramer consisting of two non-identical subunits: a beta subunit (TrpG) and a large alpha subunit (TrpE). The cofactor is Mg(2+).

The catalysed reaction is chorismate + L-glutamine = anthranilate + pyruvate + L-glutamate + H(+). The protein operates within amino-acid biosynthesis; L-tryptophan biosynthesis; L-tryptophan from chorismate: step 1/5. With respect to regulation, feedback inhibited by tryptophan. Part of a heterotetrameric complex that catalyzes the two-step biosynthesis of anthranilate, an intermediate in the biosynthesis of L-tryptophan. In the first step, the glutamine-binding beta subunit (TrpG) of anthranilate synthase (AS) provides the glutamine amidotransferase activity which generates ammonia as a substrate that, along with chorismate, is used in the second step, catalyzed by the large alpha subunit of AS (TrpE) to produce anthranilate. In the absence of TrpG, TrpE can synthesize anthranilate directly from chorismate and high concentrations of ammonia. In Spirochaeta aurantia, this protein is Anthranilate synthase component 1 (trpE).